A 187-amino-acid polypeptide reads, in one-letter code: Peptide deformylase 2 (187 aa).

Fe cation is bound by residues Cys107 and His149. Glu150 is an active-site residue. His153 is a binding site for Fe cation.

It belongs to the polypeptide deformylase family. Requires Fe(2+) as cofactor.

It catalyses the reaction N-terminal N-formyl-L-methionyl-[peptide] + H2O = N-terminal L-methionyl-[peptide] + formate. Removes the formyl group from the N-terminal Met of newly synthesized proteins. Requires at least a dipeptide for an efficient rate of reaction. N-terminal L-methionine is a prerequisite for activity but the enzyme has broad specificity at other positions. This is Peptide deformylase 2 from Gloeobacter violaceus (strain ATCC 29082 / PCC 7421).